Reading from the N-terminus, the 454-residue chain is Bifunctional protein GlmU (454 aa).

The segment at 1–233 (MTNRTCLAVI…RESAVGINNR (233 aa)) is pyrophosphorylase. Residues 11-14 (LAAG), lysine 25, glutamine 79, and 84-85 (GT) contribute to the UDP-N-acetyl-alpha-D-glucosamine site. Residue aspartate 109 participates in Mg(2+) binding. Residues glycine 145, glutamate 159, asparagine 174, and asparagine 231 each contribute to the UDP-N-acetyl-alpha-D-glucosamine site. Asparagine 231 is a binding site for Mg(2+). Residues 234–254 (AELAEAEAVWQQKRRRELMLS) are linker. The tract at residues 255 to 454 (GVTLIAPETV…AEEKAKKSGG (200 aa)) is N-acetyltransferase. Positions 320 and 338 each coordinate UDP-N-acetyl-alpha-D-glucosamine. Residue histidine 350 is the Proton acceptor of the active site. The UDP-N-acetyl-alpha-D-glucosamine site is built by tyrosine 353 and asparagine 364. Residues alanine 367, 373–374 (NY), serine 410, and arginine 427 each bind acetyl-CoA.

In the N-terminal section; belongs to the N-acetylglucosamine-1-phosphate uridyltransferase family. This sequence in the C-terminal section; belongs to the transferase hexapeptide repeat family. As to quaternary structure, homotrimer. Mg(2+) is required as a cofactor.

The protein resides in the cytoplasm. The enzyme catalyses alpha-D-glucosamine 1-phosphate + acetyl-CoA = N-acetyl-alpha-D-glucosamine 1-phosphate + CoA + H(+). The catalysed reaction is N-acetyl-alpha-D-glucosamine 1-phosphate + UTP + H(+) = UDP-N-acetyl-alpha-D-glucosamine + diphosphate. It functions in the pathway nucleotide-sugar biosynthesis; UDP-N-acetyl-alpha-D-glucosamine biosynthesis; N-acetyl-alpha-D-glucosamine 1-phosphate from alpha-D-glucosamine 6-phosphate (route II): step 2/2. The protein operates within nucleotide-sugar biosynthesis; UDP-N-acetyl-alpha-D-glucosamine biosynthesis; UDP-N-acetyl-alpha-D-glucosamine from N-acetyl-alpha-D-glucosamine 1-phosphate: step 1/1. Its pathway is bacterial outer membrane biogenesis; LPS lipid A biosynthesis. In terms of biological role, catalyzes the last two sequential reactions in the de novo biosynthetic pathway for UDP-N-acetylglucosamine (UDP-GlcNAc). The C-terminal domain catalyzes the transfer of acetyl group from acetyl coenzyme A to glucosamine-1-phosphate (GlcN-1-P) to produce N-acetylglucosamine-1-phosphate (GlcNAc-1-P), which is converted into UDP-GlcNAc by the transfer of uridine 5-monophosphate (from uridine 5-triphosphate), a reaction catalyzed by the N-terminal domain. In Chelativorans sp. (strain BNC1), this protein is Bifunctional protein GlmU.